Consider the following 226-residue polypeptide: Putative DNA repair protein recA homolog 4 (226 aa).

41 to 48 (GPEASGKT) contacts ATP.

Belongs to the RecA family.

The protein localises to the cytoplasm. Involved in recombination ability and DNA strand transfer activity. This Arabidopsis thaliana (Mouse-ear cress) protein is Putative DNA repair protein recA homolog 4.